The chain runs to 897 residues: Schlafen family member 13 (897 aa).

A n'-domain region region spans residues 2-355 (EANHCSLGVY…WVEKMMDADP (354 aa)). Residues glutamate 208 and glutamate 213 contribute to the active site. Positions 284, 286, and 321 each coordinate Zn(2+). 599–606 (GLPGSGKT) serves as a coordination point for ATP.

The protein belongs to the Schlafen family. Subgroup III subfamily. The cofactor is Mg(2+).

The protein localises to the cytoplasm. In terms of biological role, endoribonuclease that cleaves tRNAs and rRNAs. Cleaves tRNAs 11 nucleotides from the 3'-terminus at the acceptor stem. Does not act on tRNA(Sec). Able to restrict HIV-1 virus replication; ability to inhibit HIV-1 replication is dependent on endoribonuclease activity. The protein is Schlafen family member 13 of Homo sapiens (Human).